An 801-amino-acid chain; its full sequence is Phenylalanine--tRNA ligase beta subunit (801 aa).

In terms of domain architecture, tRNA-binding spans 39–148 (AGSFTGVKVG…EDAVIGTDFR (110 aa)). The 76-residue stretch at 401 to 476 (PKPNKVALRR…RIYGYDNIPN (76 aa)) folds into the B5 domain. Positions 454, 460, 463, and 464 each coordinate Mg(2+). Residues 707–800 (SKFPSNRRDI…VSEKFGAALR (94 aa)) enclose the FDX-ACB domain.

Belongs to the phenylalanyl-tRNA synthetase beta subunit family. Type 1 subfamily. In terms of assembly, tetramer of two alpha and two beta subunits. Mg(2+) serves as cofactor.

It localises to the cytoplasm. The enzyme catalyses tRNA(Phe) + L-phenylalanine + ATP = L-phenylalanyl-tRNA(Phe) + AMP + diphosphate + H(+). This Vibrio parahaemolyticus serotype O3:K6 (strain RIMD 2210633) protein is Phenylalanine--tRNA ligase beta subunit.